The primary structure comprises 125 residues: 13 kDa ribonucleoprotein-associated protein (125 aa).

The protein belongs to the eukaryotic ribosomal protein eL8 family. As to quaternary structure, component of the U3 snoRNP particle. Binds to the C'/D and B/C motifs in U3 snoRNA. Component of the 25S U4/U6.U5 tri-snRNP particle, a subcomplex of the spliceosome. Binds to the 5' stem-loop of U4 snRNA.

Its subcellular location is the nucleus. It is found in the nucleolus. In terms of biological role, common component of the spliceosome and rRNA processing machinery. In association with the spliceosomal U4/U6.U5 tri-snRNP particle, required for splicing of pre-mRNA. In association with box C/D snoRNPs, required for processing of pre-ribosomal RNA (rRNA) and site-specific 2'-O-methylation of substrate RNAs. Essential for the accumulation and stability of U4 snRNA, U6 snRNA, and box C/D snoRNAs. The protein is 13 kDa ribonucleoprotein-associated protein (snu13) of Schizosaccharomyces pombe (strain 972 / ATCC 24843) (Fission yeast).